The primary structure comprises 450 residues: MGKYFGTDGFRGEANVTLTVDHAFKVGRFLGWYYGKNHEDGKAKIVIGKDTRRSSYMFEYSLVAGLTASGANAYLLHVTTTPSVSYVARTEDFDCGIMISASHNPFYDNGIKLINAAGEKMKEDVIAEIEKYLDGELGEIPYATRENIGCTVDYTAGRNRYMGYLMSLAIYSFKGIRVGLDASNGSAWTLAKAVFDALGAKTYVINAAPDGTNINANCGSTHIEGLQDLVRREHLDVGFAFDGDADRCLCVDEKGEVITGDHILYIYGCYMKDRDKLVGNKVVTTVMSNFGLYKAFDAVGIEYEKTKVGDKYVYECMSENGYRIGGEQSGHIIFSKYATTGDGIITALKMMEVMLAKKKTLSELAAPLVIYPQVLKNIRVTDKTQAQDDADVKAAVEAVANALGTDGRILVRESGTEPVVRVMVEAGSTEECEKYVDQVIDVIKSKGYAV.

S102 serves as the catalytic Phosphoserine intermediate. Mg(2+) is bound by residues S102, D242, D244, and D246. Residue S102 is modified to Phosphoserine.

This sequence belongs to the phosphohexose mutase family. The cofactor is Mg(2+). In terms of processing, activated by phosphorylation.

It catalyses the reaction alpha-D-glucosamine 1-phosphate = D-glucosamine 6-phosphate. In terms of biological role, catalyzes the conversion of glucosamine-6-phosphate to glucosamine-1-phosphate. In Lachnospira eligens (strain ATCC 27750 / DSM 3376 / VPI C15-48 / C15-B4) (Eubacterium eligens), this protein is Phosphoglucosamine mutase.